A 292-amino-acid chain; its full sequence is Small ribosomal subunit biogenesis GTPase RsgA (292 aa).

Positions 64 to 221 (RSELFRPAVA…LVDTPGFSSL (158 aa)) constitute a CP-type G domain. Residues 113 to 116 (NKMD) and 164 to 172 (GPSGVGKST) each bind GTP. Residues C245, C250, H252, and C258 each contribute to the Zn(2+) site.

This sequence belongs to the TRAFAC class YlqF/YawG GTPase family. RsgA subfamily. In terms of assembly, monomer. Associates with 30S ribosomal subunit, binds 16S rRNA. Zn(2+) is required as a cofactor.

It is found in the cytoplasm. Its function is as follows. One of several proteins that assist in the late maturation steps of the functional core of the 30S ribosomal subunit. Helps release RbfA from mature subunits. May play a role in the assembly of ribosomal proteins into the subunit. Circularly permuted GTPase that catalyzes slow GTP hydrolysis, GTPase activity is stimulated by the 30S ribosomal subunit. The chain is Small ribosomal subunit biogenesis GTPase RsgA from Clostridium botulinum (strain Loch Maree / Type A3).